We begin with the raw amino-acid sequence, 155 residues long: Methylated-DNA--protein-cysteine methyltransferase (155 aa).

Cys-119 acts as the Nucleophile; methyl group acceptor in catalysis.

It belongs to the MGMT family.

Its subcellular location is the cytoplasm. The catalysed reaction is a 6-O-methyl-2'-deoxyguanosine in DNA + L-cysteinyl-[protein] = S-methyl-L-cysteinyl-[protein] + a 2'-deoxyguanosine in DNA. It catalyses the reaction a 4-O-methyl-thymidine in DNA + L-cysteinyl-[protein] = a thymidine in DNA + S-methyl-L-cysteinyl-[protein]. Functionally, involved in the cellular defense against the biological effects of O6-methylguanine (O6-MeG) and O4-methylthymine (O4-MeT) in DNA. Repairs the methylated nucleobase in DNA by stoichiometrically transferring the methyl group to a cysteine residue in the enzyme. This is a suicide reaction: the enzyme is irreversibly inactivated. The chain is Methylated-DNA--protein-cysteine methyltransferase from Sulfolobus acidocaldarius (strain ATCC 33909 / DSM 639 / JCM 8929 / NBRC 15157 / NCIMB 11770).